Reading from the N-terminus, the 281-residue chain is NADPH-dependent 7-cyano-7-deazaguanine reductase (281 aa).

88 to 90 (IES) provides a ligand contact to substrate. 90 to 91 (SK) lines the NADPH pocket. Catalysis depends on Cys189, which acts as the Thioimide intermediate. Asp196 acts as the Proton donor in catalysis. Residue 228–229 (HE) coordinates substrate. 257–258 (RG) contacts NADPH.

This sequence belongs to the GTP cyclohydrolase I family. QueF type 2 subfamily. As to quaternary structure, homodimer.

Its subcellular location is the cytoplasm. It carries out the reaction 7-aminomethyl-7-carbaguanine + 2 NADP(+) = 7-cyano-7-deazaguanine + 2 NADPH + 3 H(+). It participates in tRNA modification; tRNA-queuosine biosynthesis. Its function is as follows. Catalyzes the NADPH-dependent reduction of 7-cyano-7-deazaguanine (preQ0) to 7-aminomethyl-7-deazaguanine (preQ1). The protein is NADPH-dependent 7-cyano-7-deazaguanine reductase of Erwinia tasmaniensis (strain DSM 17950 / CFBP 7177 / CIP 109463 / NCPPB 4357 / Et1/99).